Here is a 544-residue protein sequence, read N- to C-terminus: Protein angel homolog 2 (544 aa).

This sequence belongs to the CCR4/nocturin family.

The polypeptide is Protein angel homolog 2 (Angel2) (Mus musculus (Mouse)).